A 1246-amino-acid polypeptide reads, in one-letter code: DNA-directed RNA polymerase subunit beta (1246 aa).

The disordered stretch occupies residues 1171 to 1246; it reads IDDDAGEMSL…EFDGYNDFKA (76 aa). 2 stretches are compositionally biased toward acidic residues: residues 1202–1223 and 1230–1240; these read DEEE…EDFE and EYAEDDDEFDG.

Belongs to the RNA polymerase beta chain family. The RNAP catalytic core consists of 2 alpha, 1 beta, 1 beta' and 1 omega subunit. When a sigma factor is associated with the core the holoenzyme is formed, which can initiate transcription.

The enzyme catalyses RNA(n) + a ribonucleoside 5'-triphosphate = RNA(n+1) + diphosphate. Functionally, DNA-dependent RNA polymerase catalyzes the transcription of DNA into RNA using the four ribonucleoside triphosphates as substrates. In Alkaliphilus metalliredigens (strain QYMF), this protein is DNA-directed RNA polymerase subunit beta.